Here is a 227-residue protein sequence, read N- to C-terminus: Putative N-acetylmannosamine-6-phosphate 2-epimerase (227 aa).

The protein belongs to the NanE family.

It carries out the reaction an N-acyl-D-glucosamine 6-phosphate = an N-acyl-D-mannosamine 6-phosphate. It participates in amino-sugar metabolism; N-acetylneuraminate degradation; D-fructose 6-phosphate from N-acetylneuraminate: step 3/5. Functionally, converts N-acetylmannosamine-6-phosphate (ManNAc-6-P) to N-acetylglucosamine-6-phosphate (GlcNAc-6-P). The polypeptide is Putative N-acetylmannosamine-6-phosphate 2-epimerase (Shouchella clausii (strain KSM-K16) (Alkalihalobacillus clausii)).